We begin with the raw amino-acid sequence, 112 residues long: Putative pterin-4-alpha-carbinolamine dehydratase (112 aa).

Belongs to the pterin-4-alpha-carbinolamine dehydratase family.

It catalyses the reaction (4aS,6R)-4a-hydroxy-L-erythro-5,6,7,8-tetrahydrobiopterin = (6R)-L-erythro-6,7-dihydrobiopterin + H2O. The chain is Putative pterin-4-alpha-carbinolamine dehydratase from Vibrio parahaemolyticus serotype O3:K6 (strain RIMD 2210633).